The sequence spans 457 residues: MALNLLSIPPSYHGLIIQRIPLKTGLVPAEPLKTLAPSKSKLNTIEAKRIMSVLDEAINKVELITLMSYLESHPEALEDALPENFVEAIREHLDIGQALVEKASILQRKQKELEKGEEAEEDWDQERLLSIELHKTNLWPLTHQFRDSTKTILRLLINEPQLTRLLHTQAPGRSPGAQCLLTSLVELRGFLFEKLLTSPMEVREKNQFIQDISRRSKRNQEIIDALQAELAEVLKNKEAEVEKENFVIQELKNHLHQVFKFSENSLLRTKQEAEKQQKVDYRASQARQAKTQQDILALRAQYHNLVMENREAEQALRKKKYKVETEIENWIQKYDMEMNEKQEEYEDLETIHKEEKLQLEELKERHAVLVEEFSQIRAESEINSKKRVEAEREMVRMVRAATLIQAMWKGYLVRSMLRSRKKKRVKSKGKDKGKGKEKPKEEKGKEKKAKGKGKGKK.

3 coiled-coil regions span residues 101–127 (EKAS…DQER), 209–258 (IQDI…LHQV), and 292–381 (QQDI…AESE). Residues 397–426 (MVRAATLIQAMWKGYLVRSMLRSRKKKRVK) enclose the IQ domain. Positions 419 to 457 (SRKKKRVKSKGKDKGKGKEKPKEEKGKEKKAKGKGKGKK) are disordered. Residues 428-445 (KGKDKGKGKEKPKEEKGK) are compositionally biased toward basic and acidic residues. Over residues 446–457 (EKKAKGKGKGKK) the composition is skewed to basic residues.

Belongs to the DRC10 family. In terms of assembly, component of the nexin-dynein regulatory complex (N-DRC). Interacts with CFAP52.

It is found in the cytoplasm. The protein localises to the cytoskeleton. Its subcellular location is the flagellum axoneme. Functionally, component of the nexin-dynein regulatory complex (N-DRC), a key regulator of ciliary/flagellar motility which maintains the alignment and integrity of the distal axoneme and regulates microtubule sliding in motile axonemes. The protein is Dynein regulatory complex protein 10 (Iqcd) of Rattus norvegicus (Rat).